The primary structure comprises 93 residues: MTKGTSSFGKRHNKTHTLCRRCGRSSYHIQKSTCAQCGYPAAKLRSYNWSVKAKRRKTTGTGRMQHLKVVRRRFRNGFREGTQAKPKKAVASK.

Zn(2+)-binding residues include Cys-19, Cys-22, Cys-34, and Cys-37. The C4-type zinc finger occupies 19-37 (CRRCGRSSYHIQKSTCAQC).

The protein belongs to the eukaryotic ribosomal protein eL37 family. The cofactor is Zn(2+).

Its function is as follows. Binds to the 23S rRNA. This is Large ribosomal subunit protein eL37A from Drosophila melanogaster (Fruit fly).